Reading from the N-terminus, the 280-residue chain is Tumor necrosis factor ligand superfamily member 6 (280 aa).

The Cytoplasmic portion of the chain corresponds to 1-80 (MQQPLNYPYP…KTRRDHNTGL (80 aa)). Residues 20 to 71 (SSPWGPPGSVLPCPSSVPGRPGQRRPPPPPPPTLPPPPPPPPLPPLPLPPLK) form a disordered region. Residues 43–69 (RRPPPPPPPTLPPPPPPPPLPPLPLPP) are compositionally biased toward pro residues. Residues 81-101 (CLLVMFFMVLVALVGLGLGMF) traverse the membrane as a helical; Signal-anchor for type II membrane protein segment. The Extracellular portion of the chain corresponds to 102 to 280 (QLFHLQKELA…SKTFFGLYKL (179 aa)). Residues 144 to 280 (KVAHLTGKPN…SKTFFGLYKL (137 aa)) form the THD domain. Residue N183 is glycosylated (N-linked (GlcNAc...) asparagine). An intrachain disulfide couples C201 to C232. N-linked (GlcNAc...) asparagine glycosylation is found at N249 and N259.

The protein belongs to the tumor necrosis factor family. Homotrimer. Interacts with ARHGAP9, BAIAP2L1, BTK, CACNB3, CACNB4, CRK, DLG2, DNMBP, DOCK4, EPS8L3, FGR, FYB1, FYN, HCK, ITK, ITSN2, KALRN, LYN, MACC1, MIA, MPP4, MYO15A, NCF1, NCK1, NCK2, NCKIPSD, OSTF1, PIK3R1, PSTPIP1, RIMBP3C, SAMSN1, SH3GL3, SH3PXD2B, SH3PXD2A, SH3RF2, SKAP2, SNX33, SNX9, SORBS3, SPTA1, SRC, SRGAP1, SRGAP2, SRGAP3, TEC, TJP3 and YES1. In terms of processing, the soluble form derives from the membrane form by proteolytic processing. The membrane-bound form undergoes two successive intramembrane proteolytic cleavages. The first one is processed by ADAM10 producing an N-terminal fragment, which lacks the receptor-binding extracellular domain. This ADAM10-processed FasL (FasL APL) remnant form is still membrane anchored and further processed by SPPL2A that liberates the FasL intracellular domain (FasL ICD). FasL shedding by ADAM10 is a prerequisite for subsequent intramembrane cleavage by SPPL2A in T-cells. Post-translationally, phosphorylated by FGR on tyrosine residues; this is required for ubiquitination and subsequent internalization. N-glycosylated. Glycosylation enhances apoptotic activity. In terms of processing, monoubiquitinated.

It localises to the cell membrane. The protein resides in the cytoplasmic vesicle lumen. Its subcellular location is the lysosome lumen. It is found in the secreted. The protein localises to the nucleus. Cytokine that binds to TNFRSF6/FAS, a receptor that transduces the apoptotic signal into cells. Involved in cytotoxic T-cell-mediated apoptosis, natural killer cell-mediated apoptosis and in T-cell development. Initiates fratricidal/suicidal activation-induced cell death (AICD) in antigen-activated T-cells contributing to the termination of immune responses. TNFRSF6/FAS-mediated apoptosis has also a role in the induction of peripheral tolerance. Binds to TNFRSF6B/DcR3, a decoy receptor that blocks apoptosis. Functionally, induces FAS-mediated activation of NF-kappa-B, initiating non-apoptotic signaling pathways. Can induce apoptosis but does not appear to be essential for this process. In terms of biological role, cytoplasmic form induces gene transcription inhibition. In Felis catus (Cat), this protein is Tumor necrosis factor ligand superfamily member 6 (FASLG).